The following is a 468-amino-acid chain: ATP synthase subunit beta (468 aa).

Residue glycine 155–threonine 162 coordinates ATP.

Belongs to the ATPase alpha/beta chains family. F-type ATPases have 2 components, CF(1) - the catalytic core - and CF(0) - the membrane proton channel. CF(1) has five subunits: alpha(3), beta(3), gamma(1), delta(1), epsilon(1). CF(0) has three main subunits: a(1), b(2) and c(9-12). The alpha and beta chains form an alternating ring which encloses part of the gamma chain. CF(1) is attached to CF(0) by a central stalk formed by the gamma and epsilon chains, while a peripheral stalk is formed by the delta and b chains.

Its subcellular location is the cell membrane. The enzyme catalyses ATP + H2O + 4 H(+)(in) = ADP + phosphate + 5 H(+)(out). In terms of biological role, produces ATP from ADP in the presence of a proton gradient across the membrane. The catalytic sites are hosted primarily by the beta subunits. The polypeptide is ATP synthase subunit beta (Streptococcus agalactiae serotype Ia (strain ATCC 27591 / A909 / CDC SS700)).